Reading from the N-terminus, the 342-residue chain is Nicotinate-nucleotide--dimethylbenzimidazole phosphoribosyltransferase (342 aa).

Glutamate 311 functions as the Proton acceptor in the catalytic mechanism.

It belongs to the CobT family.

It carries out the reaction 5,6-dimethylbenzimidazole + nicotinate beta-D-ribonucleotide = alpha-ribazole 5'-phosphate + nicotinate + H(+). Its pathway is nucleoside biosynthesis; alpha-ribazole biosynthesis; alpha-ribazole from 5,6-dimethylbenzimidazole: step 1/2. Functionally, catalyzes the synthesis of alpha-ribazole-5'-phosphate from nicotinate mononucleotide (NAMN) and 5,6-dimethylbenzimidazole (DMB). The chain is Nicotinate-nucleotide--dimethylbenzimidazole phosphoribosyltransferase from Photobacterium profundum (strain SS9).